The sequence spans 356 residues: Cytochrome c oxidase subunit 2 (356 aa).

The signal sequence occupies residues M1–G23. Residues C24–D259 form a cytochrome c oxidase subunit II region. 2 helical membrane passes run L45–V65 and I93–T113. Cu cation contacts are provided by H178, C219, C223, and H227. In terms of domain architecture, Cytochrome c spans P260 to E356. Residues C273, C276, H277, and M331 each coordinate heme c.

Belongs to the cytochrome c oxidase subunit 2 family. The cofactor is Cu cation. Heme c is required as a cofactor.

It localises to the cell membrane. The enzyme catalyses 4 Fe(II)-[cytochrome c] + O2 + 8 H(+)(in) = 4 Fe(III)-[cytochrome c] + 2 H2O + 4 H(+)(out). Its function is as follows. Subunits I and II form the functional core of the enzyme complex. Electrons originating in cytochrome c are transferred via heme a and Cu(A) to the binuclear center formed by heme a3 and Cu(B). The polypeptide is Cytochrome c oxidase subunit 2 (ctaC) (Bacillus sp. (strain PS3)).